Reading from the N-terminus, the 368-residue chain is snRNA-activating protein complex subunit 1 (368 aa).

The tract at residues 1–168 (MGTPPGLQTD…EEFKDPSDRV (168 aa)) is SNAPC3-binding. An SNAPC4-binding region spans residues 164 to 268 (PSDRVMKLIT…AESLAKIKSK (105 aa)). Disordered regions lie at residues 224 to 257 (QQWH…ERCE) and 275 to 368 (QASK…RRKH). Basic and acidic residues predominate over residues 238-257 (KTNDGEEKMEGNSQETERCE). A phosphoserine mark is found at Ser-289 and Ser-290.

In terms of assembly, part of the SNAPc complex composed of 5 subunits: SNAPC1, SNAPC2, SNAPC3, SNAPC4 and SNAPC5. SNAPC1 interacts with SNAPC3, SNAPC4 and TBP.

The protein resides in the nucleus. Functionally, part of the SNAPc complex required for the transcription of both RNA polymerase II and III small-nuclear RNA genes. Binds to the proximal sequence element (PSE), a non-TATA-box basal promoter element common to these 2 types of genes. Recruits TBP and BRF2 to the U6 snRNA TATA box. In Homo sapiens (Human), this protein is snRNA-activating protein complex subunit 1 (SNAPC1).